Consider the following 141-residue polypeptide: Small ribosomal subunit protein uS12 (141 aa).

Residues 118–141 (TGVDKRRQQRSAYGAKRPKADKKK) form a disordered region.

This sequence belongs to the universal ribosomal protein uS12 family. In terms of assembly, part of the 30S ribosomal subunit. Contacts proteins S8 and S17. May interact with IF1 in the 30S initiation complex.

Its function is as follows. With S4 and S5 plays an important role in translational accuracy. In terms of biological role, interacts with and stabilizes bases of the 16S rRNA that are involved in tRNA selection in the A site and with the mRNA backbone. Located at the interface of the 30S and 50S subunits, it traverses the body of the 30S subunit contacting proteins on the other side and probably holding the rRNA structure together. The combined cluster of proteins S8, S12 and S17 appears to hold together the shoulder and platform of the 30S subunit. The chain is Small ribosomal subunit protein uS12 from Mycoplasmoides gallisepticum (strain R(low / passage 15 / clone 2)) (Mycoplasma gallisepticum).